The following is a 532-amino-acid chain: MTQLYTYIRLLGACLFIISHVQGQNLDSMLHGTGMKSDVDQKKPENGVTLAPEDTLPFLKCYCSGHCPDDAINNTCITNGHCFAIIEEDDQGETTLTSGCMKYEGSDFQCKDSPKAQLRRTIECCRTNLCNQYLQPTLPPVVIGPFFDGSVRWLAVLISMAVCIVAMIVFSSCFCYKHYCKSISSRGRYNRDLEQDEAFIPVGESLKDLIDQSQSSGSGSGLPLLVQRTIAKQIQMVRQVGKGRYGEVWMGKWRGEKVAVKVFFTTEEASWFRETEIYQTVLMRHENILGFIAADIKGTGSWTQLYLITDYHENGSLYDFLKCATLDTRALLKLAYSAACGLCHLHTEIYGTQGKPAIAHRDLKSKNILIKKNGSCCIADLGLAVKFNSDTNEVDIPLNTRVGTRRYMAPEVLDESLSKNHFQPYIMADIYSFGLIIWEMARRCITGGIVEEYQLPYYNMVPSDPSYEDMREVVCVKRLRPIVSNRWNSDECLRAVLKLMSECWAHNPASRLTALRIKKTLAKMVESQDVKI.

The N-terminal stretch at 1-23 (MTQLYTYIRLLGACLFIISHVQG) is a signal peptide. Residues 24–152 (QNLDSMLHGT…IGPFFDGSVR (129 aa)) are Extracellular-facing. 3 disulfides stabilise this stretch: Cys61–Cys82, Cys63–Cys67, and Cys76–Cys100. N-linked (GlcNAc...) asparagine glycosylation is present at Asn73. Residues 107–109 (DFQ) form a mediates specificity for BMP ligand region. Disulfide bonds link Cys110–Cys124 and Cys125–Cys130. Residues 153–176 (WLAVLISMAVCIVAMIVFSSCFCY) form a helical membrane-spanning segment. Topologically, residues 177 to 532 (KHYCKSISSR…KMVESQDVKI (356 aa)) are cytoplasmic. One can recognise a GS domain in the interval 204-233 (ESLKDLIDQSQSSGSGSGLPLLVQRTIAKQ). Residues 234-525 (IQMVRQVGKG…RIKKTLAKMV (292 aa)) enclose the Protein kinase domain. ATP is bound by residues 240-248 (VGKGRYGEV) and Lys261. The active-site Proton acceptor is the Asp362.

This sequence belongs to the protein kinase superfamily. TKL Ser/Thr protein kinase family. TGFB receptor subfamily. As to quaternary structure, interacts with low affinity with GDF5; positively regulates chondrocyte differentiation. Interacts with BMP4. Interacts with SCUBE3. Interacts with TSC22D1/TSC-22. Interacts with BMP2; the interaction may induce HAMP expression. Interacts with BMP6. Interacts with heterodimers composed of BMP2 and BMP6 in vitro; the interaction may induce HAMP expression. Mg(2+) is required as a cofactor. Requires Mn(2+) as cofactor. Post-translationally, glycosylated.

Its subcellular location is the cell membrane. It localises to the cell surface. It catalyses the reaction L-threonyl-[receptor-protein] + ATP = O-phospho-L-threonyl-[receptor-protein] + ADP + H(+). It carries out the reaction L-seryl-[receptor-protein] + ATP = O-phospho-L-seryl-[receptor-protein] + ADP + H(+). Its function is as follows. On ligand binding, forms a receptor complex consisting of two type II and two type I transmembrane serine/threonine kinases. Type II receptors phosphorylate and activate type I receptors which autophosphorylate, then bind and activate SMAD transcriptional regulators. Receptor for BMP2, BMP4, GDF5 and GDF6. Positively regulates chondrocyte differentiation through GDF5 interaction. Mediates induction of adipogenesis by GDF6. May promote the expression of HAMP, potentially via its interaction with BMP2. This chain is Bone morphogenetic protein receptor type-1A (Bmpr1a), found in Rattus norvegicus (Rat).